We begin with the raw amino-acid sequence, 124 residues long: Small ribosomal subunit protein uS12 (124 aa).

Asp89 carries the post-translational modification 3-methylthioaspartic acid.

The protein belongs to the universal ribosomal protein uS12 family. As to quaternary structure, part of the 30S ribosomal subunit. Contacts proteins S8 and S17. May interact with IF1 in the 30S initiation complex.

With S4 and S5 plays an important role in translational accuracy. In terms of biological role, interacts with and stabilizes bases of the 16S rRNA that are involved in tRNA selection in the A site and with the mRNA backbone. Located at the interface of the 30S and 50S subunits, it traverses the body of the 30S subunit contacting proteins on the other side and probably holding the rRNA structure together. The combined cluster of proteins S8, S12 and S17 appears to hold together the shoulder and platform of the 30S subunit. The polypeptide is Small ribosomal subunit protein uS12 (Buchnera aphidicola subsp. Acyrthosiphon pisum (strain 5A)).